The following is a 242-amino-acid chain: Methylthioribulose-1-phosphate dehydratase (242 aa).

At Ser87 the chain carries Phosphoserine. Cys97 contacts substrate. Zn(2+) contacts are provided by His115 and His117. Glu139 (proton donor/acceptor) is an active-site residue. His195 contacts Zn(2+).

It belongs to the aldolase class II family. MtnB subfamily. As to quaternary structure, homotetramer. Interacts with APAF1. May interact with CASP1. The cofactor is Zn(2+). As to expression, isoform 1 is ubiquitously expressed. Isoform 2 is expressed at lower levels and detected in heart, brain, pancreas, liver, placenta, skeletal muscle and kidney.

The protein resides in the cytoplasm. The catalysed reaction is 5-(methylsulfanyl)-D-ribulose 1-phosphate = 5-methylsulfanyl-2,3-dioxopentyl phosphate + H2O. It functions in the pathway amino-acid biosynthesis; L-methionine biosynthesis via salvage pathway; L-methionine from S-methyl-5-thio-alpha-D-ribose 1-phosphate: step 2/6. Its function is as follows. Catalyzes the dehydration of methylthioribulose-1-phosphate (MTRu-1-P) into 2,3-diketo-5-methylthiopentyl-1-phosphate (DK-MTP-1-P). Functions in the methionine salvage pathway, which plays a key role in cancer, apoptosis, microbial proliferation and inflammation. May inhibit the CASP1-related inflammatory response (pyroptosis), the CASP9-dependent apoptotic pathway and the cytochrome c-dependent and APAF1-mediated cell death. In Homo sapiens (Human), this protein is Methylthioribulose-1-phosphate dehydratase.